Reading from the N-terminus, the 322-residue chain is MSTNFEKHFEENVDDCNLEQLRDILVNKEGKSALANRFRALFNLKTAASEFEANPSDAEKAVQYMGETFGDNSELLKHEVAYVLGQTKNLKAAPLLRKTMLDLAQQPMVRHEAAEALGALGDKDSLEDLEKCLKNDPHVAVRETCELAIARINWQHSDAPTKESLQQSLYSSIDPAPPLALEKEYDLEELKKLLNDQEKPLFLRYRAMFRLRDIGTDEAVLALASGFNDPSALFKHEIAYVFGQMGSTAAVPSLTEVLGRKEEAPMVRHEAAEALGAIASEDALPILKQYLNDEVDVVRESAIVALDMWEYENSNELEYAPA.

The Fe cation site is built by H78, E79, H111, and E112. 4 HEAT-like PBS-type repeats span residues 109 to 135 (VRHE…CLKN), 203 to 229 (LRYR…GFND), 234 to 260 (FKHE…VLGR), and 267 to 293 (VRHE…YLND). Fe cation contacts are provided by H236, E237, H269, and E270.

It belongs to the deoxyhypusine hydroxylase family. Fe(2+) is required as a cofactor.

The protein resides in the cytoplasm. Its subcellular location is the nucleus. The enzyme catalyses [eIF5A protein]-deoxyhypusine + AH2 + O2 = [eIF5A protein]-hypusine + A + H2O. The protein operates within protein modification; eIF5A hypusination. Functionally, catalyzes the hydroxylation of the N(6)-(4-aminobutyl)-L-lysine intermediate to form hypusine, an essential post-translational modification only found in mature eIF-5A factor. This chain is Deoxyhypusine hydroxylase, found in Candida glabrata (strain ATCC 2001 / BCRC 20586 / JCM 3761 / NBRC 0622 / NRRL Y-65 / CBS 138) (Yeast).